Reading from the N-terminus, the 557-residue chain is MAAQGFLLIATFLLVLMVLARPLGSGLAWLINDIPLPGTTGVERVLFSALGVSNHEMNWKQYLCAILGLNMLGLAVLFFMLLGQHYLPLNPQQLPGLSWDLALNTAVSFVTNTNWQSYSGETTLSYFSQMAGLTVQNFLSAASGIAVIFALIRAFTRQSMSTLGNAWVDLLRITLWVLVPVALVIALFFIQQGALQNFLPYQAVNTVEGAQQLLPMGPVASQEAIKMLGTNGGGFFNANSSHPFENPTALTNFVQMLAIFLIPTALCFAFGEVTGDRRQGRMLLWAMSVIFVICVGVVMWAEVQGNPHLLALGADSSINMEGKESRFGVLVSSLFAVVTTAASCGAVIAMHDSFTALGGMVPMWLMQIGEVVFGGVGSGLYGMMLFVLLAVFIAGLMIGRTPEYLGKKIDVREMKLTALAILVTPTLVLMGAALAMMTDAGRSAMLNPGPHGFSEVLYAVSSAANNNGSAFAGLSANSPFWNCLLAFCMFVGRFGVIIPVMAIAGSLVSKKSQPASSGTLPTHGPLFVGLLIGTVLLVGALTFIPALALGPVAEYLS.

12 helical membrane-spanning segments follow: residues 5–25, 63–83, 132–152, 170–190, 253–273, 283–303, 329–349, 356–376, 379–399, 416–436, 484–504, and 526–546; these read GFLL…PLGS, LCAI…MLLG, GLTV…FALI, LLRI…LFFI, FVQM…FGEV, LLWA…WAEV, VLVS…AVIA, ALGG…FGGV, GLYG…LMIG, LTAL…ALAM, LLAF…MAIA, and LFVG…FIPA.

This sequence belongs to the KdpA family. In terms of assembly, the system is composed of three essential subunits: KdpA, KdpB and KdpC.

It localises to the cell inner membrane. In terms of biological role, part of the high-affinity ATP-driven potassium transport (or Kdp) system, which catalyzes the hydrolysis of ATP coupled with the electrogenic transport of potassium into the cytoplasm. This subunit binds the periplasmic potassium ions and delivers the ions to the membrane domain of KdpB through an intramembrane tunnel. The polypeptide is Potassium-transporting ATPase potassium-binding subunit (Escherichia coli O157:H7).